Consider the following 58-residue polypeptide: Arabinogalactan protein 21 (58 aa).

A signal peptide spans methionine 1–alanine 24. Proline 30, proline 32, and proline 34 each carry 4-hydroxyproline. Residues proline 30, proline 32, and proline 34 are each glycosylated (O-linked (Ara...) hydroxyproline). Serine 36 carries the GPI-anchor amidated serine lipid modification. Positions aspartate 37 to phenylalanine 58 are cleaved as a propeptide — removed in mature form.

Belongs to the AG-peptide AGP family. Contains 4-hydroxyproline; hydroxylated on Pro-30, Pro-32 and Pro-34. In terms of processing, O-glycosylated on hydroxyprolines; noncontiguous hydroxylproline residues are glycosylated with arabinogalactan.

The protein resides in the cell membrane. Proteoglycan that seems to be implicated in diverse developmental roles such as differentiation, cell-cell recognition, embryogenesis and programmed cell death. This chain is Arabinogalactan protein 21, found in Arabidopsis thaliana (Mouse-ear cress).